The primary structure comprises 410 residues: MTMISDLSKDLVEEILSKAPITSLGAVRSTHKQWNALSKGRLLYKAEAKDQFLGFMVMDHRFLSMIFHLNGILKGDGEGFDRPSIREVGDIVNQIDISKVFQCDGLVLCVPSDNSSVVVWNPYLGQTKWIEAREPHDESDMFALGYDKDKNHKILRLYDECYYYYEVYNFKTESWGEEDHLPGWDIDSYNRGVSLNGNTYFLTQEQRAKDKYRVFLLCFNFTTEKFENFIAMPFKYHRKYVGTLSCVGNEKLAALYQRWDTGEMAIWVTTKIESNEVLWSNLFKVDMKPLVRFGFQQCKDEAGSFFIDEEKKLAVVFNLDKKRGKRNNKTRCYHTAYIIGEKGYLKKEVLGEAVEVRKDVYRSALVCSSSYVPSLEKINQIEEEEEDKCKSIKMVDTKRQRKKRKRKSKR.

An F-box domain is found at 2 to 49 (TMISDLSKDLVEEILSKAPITSLGAVRSTHKQWNALSKGRLLYKAEAK). Residues 386–410 (EDKCKSIKMVDTKRQRKKRKRKSKR) form a disordered region. A compositionally biased stretch (basic and acidic residues) spans 387–398 (DKCKSIKMVDTK). Residues 399-410 (RQRKKRKRKSKR) are compositionally biased toward basic residues.

This chain is F-box protein At3g19890, found in Arabidopsis thaliana (Mouse-ear cress).